A 183-amino-acid polypeptide reads, in one-letter code: Large ribosomal subunit protein uL5 (183 aa).

This sequence belongs to the universal ribosomal protein uL5 family. In terms of assembly, part of the 50S ribosomal subunit; part of the 5S rRNA/L5/L18/L25 subcomplex. Contacts the 5S rRNA and the P site tRNA. Forms a bridge to the 30S subunit in the 70S ribosome.

Its function is as follows. This is one of the proteins that bind and probably mediate the attachment of the 5S RNA into the large ribosomal subunit, where it forms part of the central protuberance. In the 70S ribosome it contacts protein S13 of the 30S subunit (bridge B1b), connecting the 2 subunits; this bridge is implicated in subunit movement. Contacts the P site tRNA; the 5S rRNA and some of its associated proteins might help stabilize positioning of ribosome-bound tRNAs. The sequence is that of Large ribosomal subunit protein uL5 from Tropheryma whipplei (strain TW08/27) (Whipple's bacillus).